A 495-amino-acid polypeptide reads, in one-letter code: Cytochrome P450 monooxygenase 113 (495 aa).

The chain crosses the membrane as a helical span at residues 2–22 (FLQIAACFTVIGLLYGLVSNL). Residue Cys-428 participates in heme binding.

This sequence belongs to the cytochrome P450 family. Heme serves as cofactor.

Its subcellular location is the membrane. Its pathway is secondary metabolite biosynthesis. Functionally, cytochrome P450 monooxygenase that is able to use 4-ethoxybenzoic acid as a substrate for oxidation. The protein is Cytochrome P450 monooxygenase 113 of Postia placenta (strain ATCC 44394 / Madison 698-R) (Brown rot fungus).